We begin with the raw amino-acid sequence, 84 residues long: MYB-like transcription factor TCL1 (84 aa).

The Myb-like domain occupies 36-73 (TEQEEDLIFRMYRLVGDRWDLIARRVVGREAKEIERYW).

In terms of tissue distribution, expressed in inflorescences and trichomes of rosette and cauline leaves.

It is found in the nucleus. In terms of biological role, MYB-type transcription factor involved in trichome cell specification. Acts as a negative regulator of trichome patterning and formation by direct binding to the cis-acting regulatory elements of GL1, thus suppressing the expression of GL1. In Arabidopsis thaliana (Mouse-ear cress), this protein is MYB-like transcription factor TCL1 (TCL1).